The following is a 120-amino-acid chain: V-type proton ATPase subunit F (120 aa).

The protein belongs to the V-ATPase F subunit family. As to quaternary structure, V-ATPase is a heteromultimeric enzyme composed of a peripheral catalytic V1 complex (components A to H) attached to an integral membrane V0 proton pore complex (components: a, c, c', c'', d, e, f and VOA1).

The protein resides in the vacuole membrane. In terms of biological role, subunit of the V1 complex of vacuolar(H+)-ATPase (V-ATPase), a multisubunit enzyme composed of a peripheral complex (V1) that hydrolyzes ATP and a membrane integral complex (V0) that translocates protons. V-ATPase is responsible for acidifying and maintaining the pH of intracellular compartments. The sequence is that of V-type proton ATPase subunit F from Schizosaccharomyces pombe (strain 972 / ATCC 24843) (Fission yeast).